Reading from the N-terminus, the 469-residue chain is Chromosomal replication initiator protein DnaA (469 aa).

Residues methionine 1–lysine 83 form a domain I, interacts with DnaA modulators region. The segment at lysine 83 to proline 128 is domain II. Residues aspartate 89–arginine 131 are disordered. Residues aspartate 129 to threonine 344 are domain III, AAA+ region. Glycine 173, glycine 175, lysine 176, and threonine 177 together coordinate ATP. Residues glutamate 345 to lysine 469 are domain IV, binds dsDNA.

The protein belongs to the DnaA family. Oligomerizes as a right-handed, spiral filament on DNA at oriC.

The protein resides in the cytoplasm. Plays an essential role in the initiation and regulation of chromosomal replication. ATP-DnaA binds to the origin of replication (oriC) to initiate formation of the DNA replication initiation complex once per cell cycle. Binds the DnaA box (a 9 base pair repeat at the origin) and separates the double-stranded (ds)DNA. Forms a right-handed helical filament on oriC DNA; dsDNA binds to the exterior of the filament while single-stranded (ss)DNA is stabiized in the filament's interior. The ATP-DnaA-oriC complex binds and stabilizes one strand of the AT-rich DNA unwinding element (DUE), permitting loading of DNA polymerase. After initiation quickly degrades to an ADP-DnaA complex that is not apt for DNA replication. Binds acidic phospholipids. In Treponema denticola (strain ATCC 35405 / DSM 14222 / CIP 103919 / JCM 8153 / KCTC 15104), this protein is Chromosomal replication initiator protein DnaA.